The chain runs to 309 residues: Porphobilinogen deaminase (309 aa).

The residue at position 241 (C241) is an S-(dipyrrolylmethanemethyl)cysteine.

The protein belongs to the HMBS family. Monomer. It depends on dipyrromethane as a cofactor.

It carries out the reaction 4 porphobilinogen + H2O = hydroxymethylbilane + 4 NH4(+). It functions in the pathway porphyrin-containing compound metabolism; protoporphyrin-IX biosynthesis; coproporphyrinogen-III from 5-aminolevulinate: step 2/4. Tetrapolymerization of the monopyrrole PBG into the hydroxymethylbilane pre-uroporphyrinogen in several discrete steps. This is Porphobilinogen deaminase from Bacillus thuringiensis (strain Al Hakam).